Reading from the N-terminus, the 335-residue chain is 2-acylglycerol O-acyltransferase 1 (335 aa).

The next 2 helical transmembrane spans lie at 24 to 44 (WVFS…CLVL) and 47 to 67 (VWLL…TPQA). N-linked (GlcNAc...) asparagine glycosylation is found at asparagine 125 and asparagine 180.

It belongs to the diacylglycerol acyltransferase family.

It localises to the endoplasmic reticulum membrane. The enzyme catalyses a 2-acylglycerol + an acyl-CoA = a 1,2-diacylglycerol + CoA. The catalysed reaction is a 2-acylglycerol + an acyl-CoA = a 1,2-diacyl-sn-glycerol + CoA. It catalyses the reaction a 2-acylglycerol + an acyl-CoA = a 2,3-diacyl-sn-glycerol + CoA. It carries out the reaction a 1-acylglycerol + an acyl-CoA = a 1,2-diacylglycerol + CoA. The enzyme catalyses a 1-acylglycerol + an acyl-CoA = a 1,3-diacylglycerol + CoA. The catalysed reaction is a 1-acyl-sn-glycerol + an acyl-CoA = a 1,3-diacyl-sn-glycerol + CoA. It catalyses the reaction a 3-acyl-sn-glycerol + an acyl-CoA = a 1,3-diacyl-sn-glycerol + CoA. Its pathway is glycerolipid metabolism; triacylglycerol biosynthesis. Functionally, involved in glycerolipid synthesis and lipid metabolism. Catalyzes the formation of diacylglycerol, the precursor of triacylglycerol, by transferring the acyl chain of a fatty acyl-CoA to a monoacylglycerol, mainly at the sn-1 or sn-3 positions. It uses both sn-2-monoacylglycerol (2-acylglycerol) and sn-1-monoacylglycerol (1-acyl-sn-glycerol) equally well as substrates, and uses sn-3-monoacylglycerol (3-acyl-sn-glycerol) with lower efficiency. The protein is 2-acylglycerol O-acyltransferase 1 (mogat1) of Xenopus laevis (African clawed frog).